Consider the following 199-residue polypeptide: dITP/XTP pyrophosphatase (199 aa).

7–12 contributes to the substrate binding site; it reads SNNRGK. Residue D68 is the Proton acceptor of the active site. D68 is a Mg(2+) binding site. Substrate contacts are provided by residues A69, 154–157, K177, and 182–183; these read FGFD and HR.

It belongs to the HAM1 NTPase family. Homodimer. The cofactor is Mg(2+).

The enzyme catalyses XTP + H2O = XMP + diphosphate + H(+). It catalyses the reaction dITP + H2O = dIMP + diphosphate + H(+). It carries out the reaction ITP + H2O = IMP + diphosphate + H(+). Functionally, pyrophosphatase that catalyzes the hydrolysis of nucleoside triphosphates to their monophosphate derivatives, with a high preference for the non-canonical purine nucleotides XTP (xanthosine triphosphate), dITP (deoxyinosine triphosphate) and ITP. Seems to function as a house-cleaning enzyme that removes non-canonical purine nucleotides from the nucleotide pool, thus preventing their incorporation into DNA/RNA and avoiding chromosomal lesions. The protein is dITP/XTP pyrophosphatase of Albidiferax ferrireducens (strain ATCC BAA-621 / DSM 15236 / T118) (Rhodoferax ferrireducens).